A 311-amino-acid polypeptide reads, in one-letter code: Homoserine kinase (311 aa).

ATP is bound at residue 88 to 98 (PEGLGLGSSGA).

This sequence belongs to the GHMP kinase family. Homoserine kinase subfamily.

It is found in the cytoplasm. It catalyses the reaction L-homoserine + ATP = O-phospho-L-homoserine + ADP + H(+). Its pathway is amino-acid biosynthesis; L-threonine biosynthesis; L-threonine from L-aspartate: step 4/5. Its function is as follows. Catalyzes the ATP-dependent phosphorylation of L-homoserine to L-homoserine phosphate. This Saccharolobus islandicus (strain Y.N.15.51 / Yellowstone #2) (Sulfolobus islandicus) protein is Homoserine kinase.